Reading from the N-terminus, the 484-residue chain is Probable glycine dehydrogenase (decarboxylating) subunit 2 (484 aa).

Lysine 264 carries the N6-(pyridoxal phosphate)lysine modification.

This sequence belongs to the GcvP family. C-terminal subunit subfamily. As to quaternary structure, the glycine cleavage system is composed of four proteins: P, T, L and H. In this organism, the P 'protein' is a heterodimer of two subunits. Pyridoxal 5'-phosphate serves as cofactor.

The catalysed reaction is N(6)-[(R)-lipoyl]-L-lysyl-[glycine-cleavage complex H protein] + glycine + H(+) = N(6)-[(R)-S(8)-aminomethyldihydrolipoyl]-L-lysyl-[glycine-cleavage complex H protein] + CO2. In terms of biological role, the glycine cleavage system catalyzes the degradation of glycine. The P protein binds the alpha-amino group of glycine through its pyridoxal phosphate cofactor; CO(2) is released and the remaining methylamine moiety is then transferred to the lipoamide cofactor of the H protein. This Legionella pneumophila (strain Corby) protein is Probable glycine dehydrogenase (decarboxylating) subunit 2.